The primary structure comprises 347 residues: Phosphoribosylformylglycinamidine cyclo-ligase (347 aa).

This sequence belongs to the AIR synthase family.

The protein resides in the cytoplasm. The catalysed reaction is 2-formamido-N(1)-(5-O-phospho-beta-D-ribosyl)acetamidine + ATP = 5-amino-1-(5-phospho-beta-D-ribosyl)imidazole + ADP + phosphate + H(+). The protein operates within purine metabolism; IMP biosynthesis via de novo pathway; 5-amino-1-(5-phospho-D-ribosyl)imidazole from N(2)-formyl-N(1)-(5-phospho-D-ribosyl)glycinamide: step 2/2. This chain is Phosphoribosylformylglycinamidine cyclo-ligase, found in Yersinia enterocolitica serotype O:8 / biotype 1B (strain NCTC 13174 / 8081).